The primary structure comprises 364 residues: Anthranilate phosphoribosyltransferase 1 (364 aa).

Residues Gly102, 105–106 (GD), Thr110, 112–115 (NIST), 130–138 (KHGNRSASS), and Ser142 each bind 5-phospho-alpha-D-ribose 1-diphosphate. Gly102 contacts anthranilate. Residue Ser114 participates in Mg(2+) binding. Position 133 (Asn133) interacts with anthranilate. Arg188 serves as a coordination point for anthranilate. Positions 247 and 248 each coordinate Mg(2+).

This sequence belongs to the anthranilate phosphoribosyltransferase family. As to quaternary structure, homodimer. Mg(2+) serves as cofactor.

It carries out the reaction N-(5-phospho-beta-D-ribosyl)anthranilate + diphosphate = 5-phospho-alpha-D-ribose 1-diphosphate + anthranilate. It participates in amino-acid biosynthesis; L-tryptophan biosynthesis; L-tryptophan from chorismate: step 2/5. In terms of biological role, catalyzes the transfer of the phosphoribosyl group of 5-phosphorylribose-1-pyrophosphate (PRPP) to anthranilate to yield N-(5'-phosphoribosyl)-anthranilate (PRA). The chain is Anthranilate phosphoribosyltransferase 1 from Nostoc sp. (strain PCC 7120 / SAG 25.82 / UTEX 2576).